The chain runs to 343 residues: Small ribosomal subunit biogenesis GTPase RsgA (343 aa).

In terms of domain architecture, CP-type G spans 116–275; the sequence is HGQLKPVAAN…LIDSPGIREF (160 aa). GTP contacts are provided by residues 163 to 166 and 217 to 225; these read NKAD and GQSGVGKSS. Residues Cys-299, Cys-304, His-306, and Cys-312 each coordinate Zn(2+).

The protein belongs to the TRAFAC class YlqF/YawG GTPase family. RsgA subfamily. In terms of assembly, monomer. Associates with 30S ribosomal subunit, binds 16S rRNA. The cofactor is Zn(2+).

The protein resides in the cytoplasm. Functionally, one of several proteins that assist in the late maturation steps of the functional core of the 30S ribosomal subunit. Helps release RbfA from mature subunits. May play a role in the assembly of ribosomal proteins into the subunit. Circularly permuted GTPase that catalyzes slow GTP hydrolysis, GTPase activity is stimulated by the 30S ribosomal subunit. The chain is Small ribosomal subunit biogenesis GTPase RsgA from Pseudomonas putida (strain ATCC 700007 / DSM 6899 / JCM 31910 / BCRC 17059 / LMG 24140 / F1).